The chain runs to 636 residues: p-hydroxybenzoate-m-hydroxylase (636 aa).

FAD-binding positions include 11 to 40, 242 to 244, Tyr290, and Asp311; these read DIVIVGAGPVGILLSLCMSRWGYKVKHIDN and RLY. A helical transmembrane segment spans residues 12–33; that stretch reads IVIVGAGPVGILLSLCMSRWGY. The N-linked (GlcNAc...) asparagine glycan is linked to Asn573.

This sequence belongs to the PheA/TfdB FAD monooxygenase family. Requires FAD as cofactor.

The protein resides in the membrane. The enzyme catalyses 4-hydroxybenzoate + NADH + O2 + H(+) = 3,4-dihydroxybenzoate + NAD(+) + H2O. The catalysed reaction is 4-hydroxybenzoate + NADPH + O2 + H(+) = 3,4-dihydroxybenzoate + NADP(+) + H2O. Its function is as follows. FAD-dependent monooxygenase; part of the benzoic acid degradation pathway also known as the protocatechuic acid pathway. Benzoic acid debradation begins with the conversion of benzoic acid into 4-hydroxybenzoic acid through hydroxylation by the benzoate-4-monooxygenase bphA, and its partner NADPH-cytochrome P450 reductase cprA which act as a mediator in electron donation from NADPH. 4-Hydroxybenzoic acid is then converted into 3,4-dihydroxybenzoic acid (also called protocatechuic acid) by the p-hydroxybenzoate-m-hydroxylase phhA. Protocatechuic acid is converted into 3-carboxy-cis,cis-muconic acid by the intradiol ring-cleavage dioxygenase prcA, which is further metabolized through the 3-oxoadipate pathway to finally enter the tricarboxylic acid cycle (TCA). The sequence is that of p-hydroxybenzoate-m-hydroxylase from Emericella nidulans (strain FGSC A4 / ATCC 38163 / CBS 112.46 / NRRL 194 / M139) (Aspergillus nidulans).